The chain runs to 225 residues: Prohead protease (225 aa).

Residues His-65, Ser-114, and Glu-141 contribute to the active site.

Belongs to the HK97 prohead protease protein family. Post-translationally, cleaves itself autocatalytically to yield the mature form of the protease.

Its subcellular location is the virion. Functionally, protease involved in virion assembly and maturation. This chain is Prohead protease (4), found in Escherichia coli (Bacteriophage HK97).